The primary structure comprises 375 residues: Terpene cyclase braA (375 aa).

Residues Asp-116, Asn-264, and Ser-268 each coordinate Mg(2+). A D(D/E)XX(D/E) motif motif is present at residues 116 to 120 (DDEID). The NSE motif motif lies at 264–272 (NDVLSLQKE). The WxxxxxRY motif signature appears at 348 to 355 (WSYSCERY). Residues Arg-354 and Tyr-355 each coordinate (2E,6E)-farnesyl diphosphate.

It belongs to the terpene synthase family. Homodimer. Mg(2+) serves as cofactor.

It carries out the reaction (2E,6E)-farnesyl diphosphate + H2O = trichobrasilenol + diphosphate. The protein operates within secondary metabolite biosynthesis. Functionally, terpene cyclase; part of the gene cluster that mediates the biosynthesis of the brasilane terpene glycosides brasilane D and E. The biosynthesis starts with the activity of the terpene cyclase braA that converts farnesyl pyrophosphate into the sesquiterpene alcohol trichobrasilenol. Subsequently, trichobrasilenol is glycosylated by the O-glycosyltransferase braB putatively using UDP-GlcNAc as sugar donor to yield brasilane A. The latter then undergoes two rounds of oxidation performed by the cytochrome P450 monooxygenase braC. In the first round braC hydroxylates C-12 forming brasilane D, which serves as substrate in the second round to establish the epoxide at the bond between C-5 and C-10 and oxidize the alcohol at C-12 to an aldehyde leading to the final product brasilane E. This Annulohypoxylon truncatum (Hypoxylon truncatum) protein is Terpene cyclase braA.